A 730-amino-acid polypeptide reads, in one-letter code: Catalase-peroxidase (730 aa).

A cross-link (tryptophyl-tyrosyl-methioninium (Trp-Tyr) (with M-244)) is located at residues 95-218 (WHSAGTYRVG…LAAVQMGLIY (124 aa)). His96 (proton acceptor) is an active-site residue. The tryptophyl-tyrosyl-methioninium (Tyr-Met) (with W-95) cross-link spans 218–244 (YVNPEGPNGNPDPLGSAHDVRETFARM). Residue His259 coordinates heme b.

Belongs to the peroxidase family. Peroxidase/catalase subfamily. Homodimer or homotetramer. Heme b is required as a cofactor. Formation of the three residue Trp-Tyr-Met cross-link is important for the catalase, but not the peroxidase activity of the enzyme.

It carries out the reaction H2O2 + AH2 = A + 2 H2O. The catalysed reaction is 2 H2O2 = O2 + 2 H2O. Functionally, bifunctional enzyme with both catalase and broad-spectrum peroxidase activity. In Clostridium botulinum (strain Eklund 17B / Type B), this protein is Catalase-peroxidase.